The sequence spans 117 residues: DNA-directed RNA polymerase II subunit RPB11 (117 aa).

Belongs to the archaeal Rpo11/eukaryotic RPB11/RPC19 RNA polymerase subunit family. In terms of assembly, component of the RNA polymerase II (Pol II) complex consisting of 12 subunits.

It localises to the nucleus. Its function is as follows. DNA-dependent RNA polymerase catalyzes the transcription of DNA into RNA using the four ribonucleoside triphosphates as substrates. Component of RNA polymerase II which synthesizes mRNA precursors and many functional non-coding RNAs. Pol II is the central component of the basal RNA polymerase II transcription machinery. It is composed of mobile elements that move relative to each other. RPB11 is part of the core element with the central large cleft. In Drosophila melanogaster (Fruit fly), this protein is DNA-directed RNA polymerase II subunit RPB11.